The primary structure comprises 78 residues: Large ribosomal subunit protein bL31 (78 aa).

Zn(2+) contacts are provided by cysteine 16, cysteine 18, cysteine 38, and cysteine 41.

It belongs to the bacterial ribosomal protein bL31 family. Type A subfamily. In terms of assembly, part of the 50S ribosomal subunit. Zn(2+) is required as a cofactor.

In terms of biological role, binds the 23S rRNA. This chain is Large ribosomal subunit protein bL31, found in Parafrankia sp. (strain EAN1pec).